The primary structure comprises 82 residues: Modifier of protein aggregation 4 (82 aa).

Positions 1–23 (MTRGNQRDLAREKNQKKLADQKK) are enriched in basic and acidic residues. Disordered stretches follow at residues 1–41 (MTRG…MDAR) and 63–82 (EAAA…PLKM).

It belongs to the SERF family.

Its subcellular location is the cytoplasm. It is found in the cytosol. It localises to the nucleus. In terms of biological role, positive regulator of protein aggregation and age-related proteotoxicity. Induces conformational changes in aggregation-prone proteins, driving them into compact formations preceding the formation of aggregates. The sequence is that of Modifier of protein aggregation 4 from Caenorhabditis elegans.